Here is a 509-residue protein sequence, read N- to C-terminus: Histidine ammonia-lyase (509 aa).

A cross-link (5-imidazolinone (Ala-Gly)) is located at residues 144–146; the sequence is ASG. The residue at position 145 (Ser-145) is a 2,3-didehydroalanine (Ser).

It belongs to the PAL/histidase family. Contains an active site 4-methylidene-imidazol-5-one (MIO), which is formed autocatalytically by cyclization and dehydration of residues Ala-Ser-Gly.

Its subcellular location is the cytoplasm. It catalyses the reaction L-histidine = trans-urocanate + NH4(+). Its pathway is amino-acid degradation; L-histidine degradation into L-glutamate; N-formimidoyl-L-glutamate from L-histidine: step 1/3. In Pseudoalteromonas atlantica (strain T6c / ATCC BAA-1087), this protein is Histidine ammonia-lyase.